The primary structure comprises 64 residues: Bacteriocin plantaricin ASM1 (64 aa).

Residues 1-21 (MSKLVKTLTVDEISKIQTNGG) form the signal peptide. The segment at residues 61–64 (SYHC) is a cross-link (lanthionine (Ser-Cys)).

Post-translationally, contains 2 disulfide bonds.

Its subcellular location is the secreted. Functionally, bacteriocin with a narrow antibacterial spectrum. Antibacterial activity against the Gram-positive bacteria L.plantarun, L.pentosus, L.curvatus, L.lindneri, L.mesenteroides and E.faecilis. Lacks antibacterial activity against the Gram-positive bacteria L.brevis, L.sakei, L.lactis, P.acidilactici, B.subtilis, B.cereus, L.monocytogenes and S.aureus, and against the Gram-negative bacteria E.coli and S.typhimurium. The protein is Bacteriocin plantaricin ASM1 of Lactiplantibacillus plantarum (Lactobacillus plantarum).